A 1296-amino-acid polypeptide reads, in one-letter code: Phosphoribosylformylglycinamidine synthase (1296 aa).

Residues 304–323 form a disordered region; the sequence is WPGAATGSGGEIRDEGATGR. ATP contacts are provided by residues 306–317 and Ala-677; that span reads GAATGSGGEIRD. Positions 678, 717, 721, and 885 each coordinate Mg(2+). Ser-887 serves as a coordination point for ATP. Positions 1000–1013 are enriched in basic and acidic residues; the sequence is PDCADQEHQAKQDE. Residues 1000 to 1019 are disordered; it reads PDCADQEHQAKQDESDPGLN. The Glutamine amidotransferase type-1 domain occupies 1043 to 1296; sequence VAVLREQGVN…MFRNARKQLG (254 aa). Cys-1136 (nucleophile) is an active-site residue. Active-site residues include His-1261 and Glu-1263.

It in the N-terminal section; belongs to the FGAMS family. As to quaternary structure, monomer.

Its subcellular location is the cytoplasm. The catalysed reaction is N(2)-formyl-N(1)-(5-phospho-beta-D-ribosyl)glycinamide + L-glutamine + ATP + H2O = 2-formamido-N(1)-(5-O-phospho-beta-D-ribosyl)acetamidine + L-glutamate + ADP + phosphate + H(+). It functions in the pathway purine metabolism; IMP biosynthesis via de novo pathway; 5-amino-1-(5-phospho-D-ribosyl)imidazole from N(2)-formyl-N(1)-(5-phospho-D-ribosyl)glycinamide: step 1/2. Functionally, phosphoribosylformylglycinamidine synthase involved in the purines biosynthetic pathway. Catalyzes the ATP-dependent conversion of formylglycinamide ribonucleotide (FGAR) and glutamine to yield formylglycinamidine ribonucleotide (FGAM) and glutamate. The polypeptide is Phosphoribosylformylglycinamidine synthase (Yersinia pestis bv. Antiqua (strain Nepal516)).